A 119-amino-acid chain; its full sequence is Enhancer of yellow 2 transcription factor (119 aa).

Residues 93 to 119 (LTENETEGTDNHDDDEDDEDENGTEDN) are disordered. Positions 96 to 119 (NETEGTDNHDDDEDDEDENGTEDN) are enriched in acidic residues.

It belongs to the ENY2 family. In terms of assembly, component of the nuclear pore complex (NPC)-associated AMEX complex (anchoring and mRNA export complex), composed of at least e(y)2 and xmas-2. Component of the SAGA transcription coactivator-HAT complexes, at least composed of Ada2b, e(y)2, Pcaf/Gcn5, Taf10 and Nipped-A/Trrap. Within the SAGA complex, e(y)2, Sgf11, and not/nonstop form an additional subcomplex of SAGA called the DUB module (deubiquitination module). Component of the THO complex, composed of at least e(y)2, HPR1, THO2, THOC5, THOC6 and THOC7. Interacts with e(y)1. Interacts with su(Hw) (via zinc fingers). Interacts with xmas-2; required for localization to the nuclear periphery. Interacts with the nuclear pore complex (NPC).

It localises to the nucleus. Its subcellular location is the nucleoplasm. The protein resides in the cytoplasm. Involved in mRNA export coupled transcription activation by association with both the AMEX and the SAGA complexes. The SAGA complex is a multiprotein complex that activates transcription by remodeling chromatin and mediating histone acetylation and deubiquitination. Within the SAGA complex, participates in a subcomplex that specifically deubiquitinates histone H2B. The SAGA complex is recruited to specific gene promoters by activators, where it is required for transcription. Required for nuclear receptor-mediated transactivation. Involved in transcription elongation by recruiting the THO complex onto nascent mRNA. The AMEX complex functions in docking export-competent ribonucleoprotein particles (mRNPs) to the nuclear entrance of the nuclear pore complex (nuclear basket). AMEX participates in mRNA export and accurate chromatin positioning in the nucleus by tethering genes to the nuclear periphery. The sequence is that of Enhancer of yellow 2 transcription factor from Drosophila willistoni (Fruit fly).